Consider the following 2769-residue polypeptide: Teneurin-4 (2769 aa).

The segment covering 1-22 (MDVKERKPYRSLTRRRDAERRY) has biased composition (basic and acidic residues). The interval 1-45 (MDVKERKPYRSLTRRRDAERRYTSSSADSEEGKAPQKSYSSSETL) is disordered. Residues 1–341 (MDVKERKPYR…KPSKYCNWKC (341 aa)) enclose the Teneurin N-terminal domain. Residues 1–345 (MDVKERKPYR…YCNWKCAALS (345 aa)) are Cytoplasmic-facing. A Phosphoserine modification is found at S124. The tract at residues 130–233 (RLWGRSTRSG…PPAGGAQEPA (104 aa)) is disordered. Low complexity predominate over residues 134–155 (RSTRSGRSSCLSSRANSNLTLT). Residues 156-166 (DTEHENTETDH) show a composition bias toward basic and acidic residues. Position 178 is a phosphothreonine (T178). The segment covering 187-211 (HTPNQHHAASINSLNRGNFTPRSNP) has biased composition (polar residues). A helical transmembrane segment spans residues 346-366 (AIVISATLVILLAYFVAMHLF). Topologically, residues 367 to 2769 (GLNWHLQPME…FMRQSEMGRR (2403 aa)) are extracellular. The segment at 400–426 (PSGGTGLETPDRKGKGTTEGKPSSFFP) is disordered. The span at 408-417 (TPDRKGKGTT) shows a compositional bias: basic and acidic residues. A glycan (N-linked (GlcNAc...) asparagine) is linked at N467. The segment at 507-526 (ARSLEGTPRQSRGTVPPSSH) is disordered. The span at 514-526 (PRQSRGTVPPSSH) shows a compositional bias: polar residues. EGF-like domains follow at residues 562–593 (SVDN…PDCG), 594–624 (RASC…AECD), 626–658 (PTNQ…ESCE), 659–690 (EVDC…TNCE), 692–725 (PRAT…HDCS), 726–757 (IEIC…ACDQ), 758–787 (RACH…EHCT), and 788–831 (IAHY…AGCD). 22 disulfide bridges follow: C566–C576, C570–C581, C583–C592, C601–C612, C614–C623, C630–C641, C635–C646, C648–C657, C662–C673, C667–C678, C680–C689, C700–C713, C715–C724, C729–C739, C733–C744, C746–C755, C760–C770, C764–C775, C777–C786, C800–C810, C804–C819, and C821–C830. 2 N-linked (GlcNAc...) asparagine glycosylation sites follow: N940 and N1259. 5 NHL repeats span residues 1216–1259 (SCPS…PSGN), 1264–1308 (LELR…IKST), 1334–1378 (TRCG…NGII), 1393–1444 (LSCD…VAGR), and 1523–1566 (CFSG…IRKN). Residues 1576–1595 (YELSSPIDQELYLFDTTGKH) form a YD 1 repeat. N1609 is a glycosylation site (N-linked (GlcNAc...) asparagine). 3 YD repeats span residues 1612–1632 (YTGD…VNVR), 1675–1694 (YHGN…WTTF), and 1695–1717 (YEYD…SSFR). N-linked (GlcNAc...) asparagine glycosylation is found at N1705, N1741, N1799, and N1884. YD repeat units follow at residues 1887–1906 (YSPG…ERME), 1928–1946 (YLEK…YIFE), 1947–1967 (FDKN…QTLE), 1974–1991 (YYRN…VIQD), 1992–2013 (FTED…VIYK), 2014–2031 (YGKL…TKVS), 2034–2054 (YDET…FTCT), 2057–2077 (YRQI…EGMV), 2085–2104 (YDNS…TPLP), 2110–2127 (YDDV…GVIY), 2128–2154 (YDIN…MKEV), 2156–2169 (YEIF…MTVQ), 2170–2193 (YDNM…TRYS), 2196–2216 (YDAD…WRYS), 2217–2237 (YDLN…LTPL), 2239–2259 (YDIR…DEDG), 2271–2291 (YNSA…SVRY), and 2293–2313 (YDGL…LQFF). N-linked (GlcNAc...) asparagine glycosylation is present at N1985. N2188 carries an N-linked (GlcNAc...) asparagine glycan. N2328 carries N-linked (GlcNAc...) asparagine glycosylation. A YD 23 repeat occupies 2339-2380 (YDLQGHLFAMELSSGDEFYIACDNIGTPLAVFSGTGLMIKQI). N2646 is a glycosylation site (N-linked (GlcNAc...) asparagine).

It belongs to the tenascin family. Teneurin subfamily. As to quaternary structure, homodimer; disulfide-linked. May also form heterodimer with either TENM1 or TENM2 or TENM3.

Its subcellular location is the cell membrane. It is found in the cell projection. The protein resides in the nucleus. It localises to the cytoplasm. In terms of biological role, involved in neural development, regulating the establishment of proper connectivity within the nervous system. Plays a role in the establishment of the anterior-posterior axis during gastrulation. Regulates the differentiation and cellular process formation of oligodendrocytes and myelination of small-diameter axons in the central nervous system (CNS). Promotes activation of focal adhesion kinase. May function as a cellular signal transducer. This Homo sapiens (Human) protein is Teneurin-4 (TENM4).